We begin with the raw amino-acid sequence, 385 residues long: Putative mitochondrial carrier protein TRV_02148.2 (385 aa).

2 Solcar repeats span residues 24–124 and 130–210; these read SNTL…LHAR and RTAG…LRRR. Helical transmembrane passes span 30–47, 132–150, 184–207, 263–279, and 294–310; these read GTAI…DSIL, AGNE…KLFT, WSAY…YLAL, YTIC…LEVI, and VVTV…LYML.

This sequence belongs to the mitochondrial carrier (TC 2.A.29) family.

The protein resides in the mitochondrion inner membrane. May function as a mitochondrial transporter. The polypeptide is Putative mitochondrial carrier protein TRV_02148.2 (Trichophyton verrucosum (strain HKI 0517)).